We begin with the raw amino-acid sequence, 78 residues long: Delta-conotoxin-like TxMKLT1-0111 (78 aa).

The signal sequence occupies residues 1–22 (MKLTCMMIVAVLFLTAWTFATA). The propeptide occupies 23–49 (DDSGNGLENLFSNAHHQMKNPEASKLN). 3 cysteine pairs are disulfide-bonded: Cys-53–Cys-68, Cys-60–Cys-72, and Cys-67–Cys-77.

This sequence belongs to the conotoxin O1 superfamily. In terms of tissue distribution, expressed by the venom duct.

It localises to the secreted. Its function is as follows. Delta-conotoxins bind to site 6 of voltage-gated sodium channels (Nav) and inhibit the inactivation process. The chain is Delta-conotoxin-like TxMKLT1-0111 from Conus textile (Cloth-of-gold cone).